Reading from the N-terminus, the 438-residue chain is MSMFLDTAKISVQAGRGGDGMVAFRREKYVPNGGPWGGDGGKGGSVIFKVDEGLRTLMDFRYNRKFRAKAGEKGMTKGMHGRGSEDLIVLVPQGTTVKDAETGKVITDLVENGQEYVIAKGGRGGRGNIRFATPRNPAPEIAENGEPGEERELELELKILADVGLVGFPSVGKSTLLSVVSAAKPKIGAYHFTTIVPNLGMVRTKSGDSFAMADLPGLIEGASQGIGLGTQFLRHIERTRVILHVIDMSASEGRDPYEDYVSINNELETYNLRLLERPQIIVANKMDMPEAEEHLAAFKEKLAAEYDEFDDMPQIFPVSTLAKQGLDSLLDATANLLASTDEFLLYDESDYQVEDEVYYGFSEEEKAFEITRDDDASWVLSGEKLERLFVMTNMERDESIMKFARQLRGMGVDEALRERGAKDGDLVRIGNFEFEFVD.

Positions 2-160 (SMFLDTAKIS…RELELELKIL (159 aa)) constitute an Obg domain. The disordered stretch occupies residues 128–147 (NIRFATPRNPAPEIAENGEP). The OBG-type G domain occupies 161–338 (ADVGLVGFPS…LLDATANLLA (178 aa)). Residues 167–174 (GFPSVGKS), 192–196 (FTTIV), 214–217 (DLPG), 284–287 (NKMD), and 319–321 (STL) contribute to the GTP site. 2 residues coordinate Mg(2+): Ser-174 and Thr-194. The region spanning 360–438 (GFSEEEKAFE…IGNFEFEFVD (79 aa)) is the OCT domain.

It belongs to the TRAFAC class OBG-HflX-like GTPase superfamily. OBG GTPase family. As to quaternary structure, monomer. It depends on Mg(2+) as a cofactor.

The protein resides in the cytoplasm. In terms of biological role, an essential GTPase which binds GTP, GDP and possibly (p)ppGpp with moderate affinity, with high nucleotide exchange rates and a fairly low GTP hydrolysis rate. Plays a role in control of the cell cycle, stress response, ribosome biogenesis and in those bacteria that undergo differentiation, in morphogenesis control. This chain is GTPase Obg, found in Streptococcus uberis (strain ATCC BAA-854 / 0140J).